Reading from the N-terminus, the 299-residue chain is Taste receptor type 2 member 50 (299 aa).

A topological domain (extracellular) is located at residue Met-1. Residues 2 to 22 traverse the membrane as a helical segment; sequence VTFLHIFFSILILVLFVLGNF. Residues 23–55 lie on the Cytoplasmic side of the membrane; the sequence is ANGFIALVNFIDLVKRKKISSADQILTALAVSR. A helical transmembrane segment spans residues 56-76; that stretch reads IGLLWALLLNWYLTVLNPAFY. Topologically, residues 77–87 are extracellular; sequence SVELRITSYNA. A helical transmembrane segment spans residues 88-108; it reads WVVTNHFSMWLAASLSIFYLL. Topologically, residues 109 to 126 are cytoplasmic; it reads KIANFSNLIFLHLKRRVR. A helical transmembrane segment spans residues 127 to 147; the sequence is SVILVILLGPLTFLVCHLFVA. Residues 148–181 are Extracellular-facing; the sequence is NMDESMSAEEYEGNMTGKLKLRNTVHLSYLTVTT. N-linked (GlcNAc...) asparagine glycosylation is present at Asn-161. Residues 182–202 traverse the membrane as a helical segment; it reads LWSFIPFTLSLISFLMLICSL. The Cytoplasmic portion of the chain corresponds to 203–229; the sequence is CKHVKKMQLHGEGSQDLSTKVHIKALQ. Residues 230 to 250 form a helical membrane-spanning segment; it reads TLISFLLLCAIFFLFLIISIW. Residues 251 to 259 lie on the Extracellular side of the membrane; sequence NPRRLQNDP. The chain crosses the membrane as a helical span at residues 260–280; that stretch reads VVVVSKAVGNIYLALDSFILI. The Cytoplasmic segment spans residues 281-299; sequence WRTKKLKHTFLLILCQIRC.

The protein belongs to the G-protein coupled receptor T2R family.

The protein localises to the membrane. Functionally, receptor that may play a role in the perception of bitterness and is gustducin-linked. May play a role in sensing the chemical composition of the gastrointestinal content. The activity of this receptor may stimulate alpha gustducin, mediate PLC-beta-2 activation and lead to the gating of TRPM5. This Pongo pygmaeus (Bornean orangutan) protein is Taste receptor type 2 member 50 (TAS2R50).